Reading from the N-terminus, the 392-residue chain is Probable tRNA sulfurtransferase (392 aa).

The region spanning 63 to 169 (GRAADAAADT…DAEAFVFLTH (107 aa)) is the THUMP domain. ATP-binding positions include 187–188 (LV), Arg-270, Gly-292, and Gln-301.

It belongs to the ThiI family.

The protein localises to the cytoplasm. The enzyme catalyses [ThiI sulfur-carrier protein]-S-sulfanyl-L-cysteine + a uridine in tRNA + 2 reduced [2Fe-2S]-[ferredoxin] + ATP + H(+) = [ThiI sulfur-carrier protein]-L-cysteine + a 4-thiouridine in tRNA + 2 oxidized [2Fe-2S]-[ferredoxin] + AMP + diphosphate. It catalyses the reaction [ThiS sulfur-carrier protein]-C-terminal Gly-Gly-AMP + S-sulfanyl-L-cysteinyl-[cysteine desulfurase] + AH2 = [ThiS sulfur-carrier protein]-C-terminal-Gly-aminoethanethioate + L-cysteinyl-[cysteine desulfurase] + A + AMP + 2 H(+). It functions in the pathway cofactor biosynthesis; thiamine diphosphate biosynthesis. In terms of biological role, catalyzes the ATP-dependent transfer of a sulfur to tRNA to produce 4-thiouridine in position 8 of tRNAs, which functions as a near-UV photosensor. Also catalyzes the transfer of sulfur to the sulfur carrier protein ThiS, forming ThiS-thiocarboxylate. This is a step in the synthesis of thiazole, in the thiamine biosynthesis pathway. The sulfur is donated as persulfide by IscS. In Halobacterium salinarum (strain ATCC 29341 / DSM 671 / R1), this protein is Probable tRNA sulfurtransferase.